The following is a 444-amino-acid chain: Chitinase-like protein Idgf5 (444 aa).

The first 26 residues, 1–26, serve as a signal peptide directing secretion; the sequence is MMWIQKNPFLGLLLCSFLAFFQSTYA. The 416-residue stretch at 29–444 folds into the GH18 domain; it reads GKLVCFYDAQ…PILRSIKFKL (416 aa). A disulfide bond links Cys-33 and Cys-60. N-linked (GlcNAc...) asparagine glycans are attached at residues Asn-289 and Asn-311. Cysteines 349 and 429 form a disulfide.

Belongs to the glycosyl hydrolase 18 family. IDGF subfamily. Post-translationally, glycosylated.

Its subcellular location is the secreted. Its function is as follows. Probably required to stimulate the proliferation, polarization and motility of imaginal disk cells. May act by stabilizing the binding of insulin-like peptides to its receptor through a simultaneous interaction with both molecules to form a multiprotein signaling complex. This chain is Chitinase-like protein Idgf5 (Idgf5), found in Drosophila melanogaster (Fruit fly).